A 473-amino-acid polypeptide reads, in one-letter code: MNRLLASALLVGSAVVAPVSAACIKNATVTEVDVAIIGGGASGVYAAARLIDNNKTVVVLERNADRIGGQTETYYDPTTGTPVNVGVKVFSNTTVTTDFLKRFDFPMGTLNVGQTLATGTQYVDFATGKLIPNFTAVVPAVQAAAMQRYAAELAKYPQIKFGYNLGPQVPEDLVLPFGKFMEKHNLTGMAQTMFEFNSGYTPLLEIPALYILKYLDTYELQSLQSGSFIVAANGDSATLYRNAAKFLGERVVYGVSGMHIQRSSAAGGRVTISVGNSTTGTHMIRAKKLIVAAPPTLDNLRSTGLDLDTTEAGLFGKLSAGVFYSLVVKDTGVAKANLRNRHPANPYGFPDQPFIYSVIPLPKTSGLAQVLLGSASPLTASQVEARVAADIGRLPASLRGNATSVPKVVTMAAHTWNVMAPVADIKAGFYDKLEGLQGLKDTWYIGAAWATQSSTTIWEGLEQEFLPKLLAAL.

A signal peptide spans 1 to 21 (MNRLLASALLVGSAVVAPVSA). N-linked (GlcNAc...) asparagine glycosylation is found at Asn26, Asn54, Asn92, Asn133, Asn185, Asn276, and Asn401.

Belongs to the beta-cyclopiazonate dehydrogenase family. The cofactor is FAD.

It participates in secondary metabolite biosynthesis; terpenoid biosynthesis. Functionally, FAD-dependent oxidoreductase; part of the gene cluster that mediates the biosynthesis of the diterpenoid pyrones subglutinols A and B. The first step of the pathway is the synthesis of the alpha-pyrone moiety by the polyketide synthase dpasA via condensation of one acetyl-CoA starter unit with 3 malonyl-CoA units and 2 methylations. The alpha-pyrone is then combined with geranylgeranyl pyrophosphate (GGPP) formed by the GGPP synthase dpasD through the action of the prenyltransferase dpasC to yield a linear alpha-pyrone diterpenoid. Subsequent steps in the diterpenoid pyrone biosynthetic pathway involve the decalin core formation, which is initiated by the epoxidation of the C10-C11 olefin by the FAD-dependent oxidoreductase dpasE, and is followed by a cyclization cascade catalyzed by the terpene cyclase dpasB. The FAD-linked oxidoreductase dpasF is then involved in tetrahydrofuran (THF) ring formation at the C5 unit to complete the formation of subglutinols A and B. DpasF possesses also an additional catalytic ability of multi-step oxidations to generate a new DDP analog with an enone system at the C5 named FDDP A. In Apiospora sacchari (Arthrinium sacchari), this protein is FAD-dependent oxidoreductase dpasF.